We begin with the raw amino-acid sequence, 147 residues long: Auxin-responsive protein SAUR41 (147 aa).

This sequence belongs to the ARG7 family. As to expression, specifically expressed in the quiescent center and cortex or endodermis initials of root stem niches. Expressed in vascular tissues from hypocotyls, petioles and cotyledons.

The protein localises to the cytoplasm. In terms of biological role, plays a role in the regulation of cell expansion, root meristem patterning and auxin transport. The polypeptide is Auxin-responsive protein SAUR41 (Arabidopsis thaliana (Mouse-ear cress)).